The following is a 545-amino-acid chain: CTP synthase (545 aa).

Residues 1–266 are amidoligase domain; it reads MTTNYIFVTG…DDYICKRFSL (266 aa). Serine 14 contacts CTP. Serine 14 is a binding site for UTP. ATP-binding positions include 15-20 and aspartate 72; that span reads SLGKGI. The Mg(2+) site is built by aspartate 72 and glutamate 140. CTP-binding positions include 147-149, 187-192, and lysine 223; these read DIE and KTKPTQ. UTP is bound by residues 187 to 192 and lysine 223; that span reads KTKPTQ. 239 to 241 contributes to the ATP binding site; that stretch reads KDV. One can recognise a Glutamine amidotransferase type-1 domain in the interval 291–542; that stretch reads TIGMVGKYIE…VKAANEHQKR (252 aa). Residue glycine 352 participates in L-glutamine binding. Cysteine 379 (nucleophile; for glutamine hydrolysis) is an active-site residue. Residues 380–383, glutamate 403, and arginine 470 contribute to the L-glutamine site; that span reads LGMQ. Active-site residues include histidine 515 and glutamate 517.

The protein belongs to the CTP synthase family. Homotetramer.

It carries out the reaction UTP + L-glutamine + ATP + H2O = CTP + L-glutamate + ADP + phosphate + 2 H(+). The catalysed reaction is L-glutamine + H2O = L-glutamate + NH4(+). The enzyme catalyses UTP + NH4(+) + ATP = CTP + ADP + phosphate + 2 H(+). It participates in pyrimidine metabolism; CTP biosynthesis via de novo pathway; CTP from UDP: step 2/2. Its activity is regulated as follows. Allosterically activated by GTP, when glutamine is the substrate; GTP has no effect on the reaction when ammonia is the substrate. The allosteric effector GTP functions by stabilizing the protein conformation that binds the tetrahedral intermediate(s) formed during glutamine hydrolysis. Inhibited by the product CTP, via allosteric rather than competitive inhibition. Functionally, catalyzes the ATP-dependent amination of UTP to CTP with either L-glutamine or ammonia as the source of nitrogen. Regulates intracellular CTP levels through interactions with the four ribonucleotide triphosphates. This Salmonella newport (strain SL254) protein is CTP synthase.